Reading from the N-terminus, the 218-residue chain is Cold-regulated protein 28 (218 aa).

Disordered regions lie at residues 1 to 51 (MEND…ADSK) and 166 to 218 (TKHS…KPRT). Positions 20-37 (EASAESQSESTLSNSLDS) are enriched in low complexity. Over residues 186-207 (GEVSKKREREANNDDSSLKEDQ) the composition is skewed to basic and acidic residues.

Its subcellular location is the nucleus. Together with COR27, involved in central circadian clock regulation and in flowering promotion, by binding to the chromatin of clock-associated evening genes TOC1, PRR5, ELF4 and cold-responsive genes in order to repress their transcription. Negative regulator of freezing tolerance. The protein is Cold-regulated protein 28 of Arabidopsis thaliana (Mouse-ear cress).